The chain runs to 317 residues: Melanocyte-stimulating hormone receptor (317 aa).

Residues 1-37 are Extracellular-facing; it reads MPMQGAQRRLLGSLNSTPTATPNLGLAANHTGAPCLE. N-linked (GlcNAc...) asparagine glycosylation is present at N29. Residues 38–63 form a helical membrane-spanning segment; sequence VSIPDGLFLSLGLVSLVENVLVVAAI. Residues 64 to 72 are Cytoplasmic-facing; sequence AKNRNLHSP. Residues 73–93 traverse the membrane as a helical segment; the sequence is MYCFICCLALSDLLVSGSNML. The Extracellular segment spans residues 94 to 118; that stretch reads ETAVILLLEAGALATRASVVQQLQN. A helical membrane pass occupies residues 119–140; sequence TIDVLTCSSMLCSLCFLGAIAV. Topologically, residues 141–163 are cytoplasmic; it reads DRYVSIFYALRYHSIVTLPRARR. A helical transmembrane segment spans residues 164–183; the sequence is AIAAIWVASVLSSTLFIAYC. Over 184–191 the chain is Extracellular; that stretch reads DHAAVLLC. The helical transmembrane segment at 192–211 threads the bilayer; that stretch reads LVVFFLAMLVLMAVLYVHML. The Cytoplasmic segment spans residues 212–240; sequence ARACQHAQGITRLHKRQLPAHQGFGLRGA. The helical transmembrane segment at 241–266 threads the bilayer; sequence ATLTILLGIFFLCWGPFFLHLMLVVL. The Extracellular portion of the chain corresponds to 267–279; that stretch reads CPQHLTCSCIFKN. A helical membrane pass occupies residues 280-300; it reads FKVFLTLIICNTIIDPLIYAF. Topologically, residues 301–317 are cytoplasmic; sequence RSQELCRTLKEVLLCSW. C315 is lipidated: S-palmitoyl cysteine.

The protein belongs to the G-protein coupled receptor 1 family. In terms of assembly, interacts with MGRN1, but does not undergo MGRN1-mediated ubiquitination; this interaction competes with GNAS-binding and thus inhibits agonist-induced cAMP production. Interacts with OPN3; the interaction results in a decrease in MC1R-mediated cAMP signaling and ultimately a decrease in melanin production in melanocytes.

It is found in the cell membrane. Receptor for MSH (alpha, beta and gamma) and ACTH. The activity of this receptor is mediated by G proteins which activate adenylate cyclase. Mediates melanogenesis, the production of eumelanin (black/brown) and phaeomelanin (red/yellow), via regulation of cAMP signaling in melanocytes. The sequence is that of Melanocyte-stimulating hormone receptor (MC1R) from Alouatta palliata (Mantled howler monkey).